The chain runs to 213 residues: Large ribosomal subunit protein uL1 (213 aa).

The protein belongs to the universal ribosomal protein uL1 family. Part of the 50S ribosomal subunit.

Functionally, binds directly to 23S rRNA. Probably involved in E site tRNA release. Its function is as follows. Protein L1 is also a translational repressor protein, it controls the translation of its operon by binding to its mRNA. This Methanococcus voltae protein is Large ribosomal subunit protein uL1.